The following is a 378-amino-acid chain: Chaperone protein DnaJ 2 (378 aa).

One can recognise a J domain in the interval 4-68 (DYYAVLGVRR…QKKQVYDLGG (65 aa)). The CR-type zinc finger occupies 130–212 (GTTKDIQVDT…CAGDGRVRSR (83 aa)). Residues Cys-143, Cys-146, Cys-160, Cys-163, Cys-186, Cys-189, Cys-200, and Cys-203 each coordinate Zn(2+). 4 CXXCXGXG motif repeats span residues 143–150 (CNTCNGEG), 160–167 (CDMCRGRG), 186–193 (CPQCQGFG), and 200–207 (CPECAGDG). Disordered regions lie at residues 297 to 319 (RPGTQSGQSIPKHGRGVTHLRGG) and 351 to 378 (RGEERPTGQFQPGQQGLFSRLKDAFNGR). The segment covering 358–367 (GQFQPGQQGL) has biased composition (polar residues).

Belongs to the DnaJ family. In terms of assembly, homodimer. Requires Zn(2+) as cofactor.

It localises to the cytoplasm. Its function is as follows. Participates actively in the response to hyperosmotic and heat shock by preventing the aggregation of stress-denatured proteins and by disaggregating proteins, also in an autonomous, DnaK-independent fashion. Unfolded proteins bind initially to DnaJ; upon interaction with the DnaJ-bound protein, DnaK hydrolyzes its bound ATP, resulting in the formation of a stable complex. GrpE releases ADP from DnaK; ATP binding to DnaK triggers the release of the substrate protein, thus completing the reaction cycle. Several rounds of ATP-dependent interactions between DnaJ, DnaK and GrpE are required for fully efficient folding. Also involved, together with DnaK and GrpE, in the DNA replication of plasmids through activation of initiation proteins. This chain is Chaperone protein DnaJ 2, found in Streptomyces coelicolor (strain ATCC BAA-471 / A3(2) / M145).